The chain runs to 214 residues: MKIVIIDYDMGNVRSIENAINHIGDYTIIVSGEPDTIRSADCLILPGVGAFPDAMKKLEQQKLIDLLTEEVVVRRKPVLGICLGMQLLFESSEEIQLTKGLGWIPGKVEYMRPGNDLRVPHVGWNSLILKKENSLFDYLQDDKDFYFVHSLWVNCPEKYKLATFEYGIEMTASVQYENIVGMQFHPEKSQRNGLEAIRSFLDWVKIQKLGVSHA.

Residues 2 to 210 form the Glutamine amidotransferase type-1 domain; the sequence is KIVIIDYDMG…LDWVKIQKLG (209 aa). The active-site Nucleophile is cysteine 82. Active-site residues include histidine 185 and glutamate 187.

In terms of assembly, heterodimer of HisH and HisF.

The protein resides in the cytoplasm. The enzyme catalyses 5-[(5-phospho-1-deoxy-D-ribulos-1-ylimino)methylamino]-1-(5-phospho-beta-D-ribosyl)imidazole-4-carboxamide + L-glutamine = D-erythro-1-(imidazol-4-yl)glycerol 3-phosphate + 5-amino-1-(5-phospho-beta-D-ribosyl)imidazole-4-carboxamide + L-glutamate + H(+). It carries out the reaction L-glutamine + H2O = L-glutamate + NH4(+). It participates in amino-acid biosynthesis; L-histidine biosynthesis; L-histidine from 5-phospho-alpha-D-ribose 1-diphosphate: step 5/9. Its function is as follows. IGPS catalyzes the conversion of PRFAR and glutamine to IGP, AICAR and glutamate. The HisH subunit provides the glutamine amidotransferase activity that produces the ammonia necessary to HisF for the synthesis of IGP and AICAR. The polypeptide is Imidazole glycerol phosphate synthase subunit HisH 2 (hisH2) (Vibrio vulnificus (strain YJ016)).